We begin with the raw amino-acid sequence, 469 residues long: A-type ATP synthase subunit B 3 (469 aa).

It belongs to the ATPase alpha/beta chains family. Has multiple subunits with at least A(3), B(3), C, D, E, F, H, I and proteolipid K(x).

It localises to the cell membrane. Component of the A-type ATP synthase that produces ATP from ADP in the presence of a proton gradient across the membrane. The B chain is a regulatory subunit. This Methanospirillum hungatei JF-1 (strain ATCC 27890 / DSM 864 / NBRC 100397 / JF-1) protein is A-type ATP synthase subunit B 3.